A 187-amino-acid polypeptide reads, in one-letter code: Photosystem I assembly protein Ycf4 (187 aa).

The next 2 membrane-spanning stretches (helical) occupy residues 21 to 43 (LSNY…AGIS) and 69 to 91 (LLYG…WNVG).

The protein belongs to the Ycf4 family.

It is found in the plastid. The protein resides in the cyanelle thylakoid membrane. In terms of biological role, seems to be required for the assembly of the photosystem I complex. The protein is Photosystem I assembly protein Ycf4 of Cyanophora paradoxa.